We begin with the raw amino-acid sequence, 366 residues long: tRNA(Met) cytidine acetate ligase (366 aa).

ATP contacts are provided by residues 7–20, Gly96, Asn152, and Arg175; that span reads IAEF…HKYL.

It belongs to the TmcAL family.

It is found in the cytoplasm. It carries out the reaction cytidine(34) in elongator tRNA(Met) + acetate + ATP = N(4)-acetylcytidine(34) in elongator tRNA(Met) + AMP + diphosphate. In terms of biological role, catalyzes the formation of N(4)-acetylcytidine (ac(4)C) at the wobble position of elongator tRNA(Met), using acetate and ATP as substrates. First activates an acetate ion to form acetyladenylate (Ac-AMP) and then transfers the acetyl group to tRNA to form ac(4)C34. The protein is tRNA(Met) cytidine acetate ligase of Streptococcus mutans serotype c (strain ATCC 700610 / UA159).